We begin with the raw amino-acid sequence, 530 residues long: Chitin synthase 1 (530 aa).

Residue asparagine 17 is glycosylated (N-linked (GlcNAc...) asparagine). Residues 22–94 (QESSSNLIQQ…QANNNRKVTR (73 aa)) form a disordered region. The span at 24-56 (SSSNLIQQQQPGTNYARNQQTLSSLRSQKQQAE) shows a compositional bias: polar residues. N-linked (GlcNAc...) asparagine glycosylation is found at asparagine 118, asparagine 310, and asparagine 474. 2 helical membrane-spanning segments follow: residues 477–497 (FFAGVYGLIHFSKIWNSGHGF) and 508–528 (IYNVISLIFSWFSVVIVLSFL).

This sequence belongs to the chitin synthase family. Class II subfamily.

It is found in the cell membrane. The catalysed reaction is [(1-&gt;4)-N-acetyl-beta-D-glucosaminyl](n) + UDP-N-acetyl-alpha-D-glucosamine = [(1-&gt;4)-N-acetyl-beta-D-glucosaminyl](n+1) + UDP + H(+). Polymerizes chitin, a structural polymer of the cell wall and septum, by transferring the sugar moiety of UDP-GlcNAc to the non-reducing end of the growing chitin polymer. The protein is Chitin synthase 1 of Rhizopus delemar (strain RA 99-880 / ATCC MYA-4621 / FGSC 9543 / NRRL 43880) (Mucormycosis agent).